The primary structure comprises 548 residues: (2S)-methylsuccinyl-CoA dehydrogenase (548 aa).

FAD-binding positions include 282 to 291 (AVFTEPNTGS) and 315 to 317 (WIT). S291 contacts substrate. Substrate is bound at residue 409-412 (ESAR). FAD-binding positions include R437 and 505–509 (QIHGG). E532 functions as the Proton acceptor in the catalytic mechanism. 534 to 536 (AAE) is a binding site for FAD.

The protein belongs to the acyl-CoA dehydrogenase family. Homodimer. The cofactor is FAD.

The catalysed reaction is (2S)-methylsuccinyl-CoA + oxidized [electron-transfer flavoprotein] + H(+) = 2-methylfumaryl-CoA + reduced [electron-transfer flavoprotein]. Functionally, involved in the ethylmalonyl-CoA pathway, a new acetyl-CoA assimilation strategy that operates in a number of bacteria and replaces the glyoxylate cycle. Catalyzes the oxidation of (2S)-methylsuccinyl-CoA to yield mesaconyl-(C1)-CoA. Highly specific for (S)-methylsuccinyl-CoA. In Cereibacter sphaeroides (Rhodobacter sphaeroides), this protein is (2S)-methylsuccinyl-CoA dehydrogenase.